Here is a 99-residue protein sequence, read N- to C-terminus: DNA-directed RNA polymerase subunit Rpo11 (99 aa).

The protein belongs to the archaeal Rpo11/eukaryotic RPB11/RPC19 RNA polymerase subunit family. Part of the RNA polymerase complex.

It is found in the cytoplasm. It carries out the reaction RNA(n) + a ribonucleoside 5'-triphosphate = RNA(n+1) + diphosphate. In terms of biological role, DNA-dependent RNA polymerase (RNAP) catalyzes the transcription of DNA into RNA using the four ribonucleoside triphosphates as substrates. The polypeptide is DNA-directed RNA polymerase subunit Rpo11 (Aeropyrum pernix (strain ATCC 700893 / DSM 11879 / JCM 9820 / NBRC 100138 / K1)).